A 231-amino-acid chain; its full sequence is ATP-dependent dethiobiotin synthetase BioD (231 aa).

Residue 12 to 17 coordinates ATP; sequence DVGKTV. Thr-16 contacts Mg(2+). Lys-37 is an active-site residue. Position 41 (Thr-41) interacts with substrate. ATP-binding positions include Asp-50, 109–112, 170–171, and 200–202; these read EGAG, GS, and PAG. Mg(2+) contacts are provided by Asp-50 and Glu-109.

The protein belongs to the dethiobiotin synthetase family. In terms of assembly, homodimer. Mg(2+) serves as cofactor.

It is found in the cytoplasm. The enzyme catalyses (7R,8S)-7,8-diammoniononanoate + CO2 + ATP = (4R,5S)-dethiobiotin + ADP + phosphate + 3 H(+). It functions in the pathway cofactor biosynthesis; biotin biosynthesis; biotin from 7,8-diaminononanoate: step 1/2. Catalyzes a mechanistically unusual reaction, the ATP-dependent insertion of CO2 between the N7 and N8 nitrogen atoms of 7,8-diaminopelargonic acid (DAPA, also called 7,8-diammoniononanoate) to form a ureido ring. The protein is ATP-dependent dethiobiotin synthetase BioD of Rhodococcus jostii (strain RHA1).